Consider the following 400-residue polypeptide: Phosphoglycerate kinase (400 aa).

Residues 21–23, arginine 36, 59–62, arginine 116, and arginine 149 contribute to the substrate site; these read DLN and HLGR. Residues lysine 200, glutamate 317, and 343 to 346 contribute to the ATP site; that span reads GGDT.

The protein belongs to the phosphoglycerate kinase family. As to quaternary structure, monomer.

It is found in the cytoplasm. It carries out the reaction (2R)-3-phosphoglycerate + ATP = (2R)-3-phospho-glyceroyl phosphate + ADP. The protein operates within carbohydrate degradation; glycolysis; pyruvate from D-glyceraldehyde 3-phosphate: step 2/5. This Blochmanniella floridana protein is Phosphoglycerate kinase.